An 84-amino-acid polypeptide reads, in one-letter code: Protein myomixer (84 aa).

Over 1–4 the chain is Cytoplasmic; sequence MPTP. Residues 5–25 form a helical membrane-spanning segment; that stretch reads LLPLLLRLLLSCLLLPAARLA. The Extracellular segment spans residues 26-84; that stretch reads RQYLLPLLRRLARRLGSQDMREALLGCLLFILSQRHSPDAGEASRVDRLERRERLGPQK. The AxLyCxL signature appears at 48–57; it reads ALLGCLLFIL. A disordered region spans residues 62 to 84; that stretch reads SPDAGEASRVDRLERRERLGPQK.

It belongs to the MYMX family. Interacts with MYMK.

The protein resides in the cell membrane. Its function is as follows. Myoblast-specific protein that mediates myoblast fusion, an essential step for the formation of multi-nucleated muscle fibers. Involved in membrane fusion downstream of the lipid mixing step mediated by MYMK. Acts by generating membrane stresses via its extracellular C-terminus, leading to drive fusion pore formation. Acts independently of MYMK. Involved in skeletal muscle regeneration in response to injury by mediating the fusion of satellite cells, a population of muscle stem cells, with injured myofibers. The chain is Protein myomixer from Homo sapiens (Human).